A 945-amino-acid chain; its full sequence is Xylanolytic transcriptional activator xlnR (945 aa).

Low complexity predominate over residues 1 to 23 (MSTPSIPQFTSSFSPFSSGSHST). Disordered regions lie at residues 1–32 (MSTP…QTVG) and 53–118 (AAGT…APVR). The segment covering 73–84 (HTKDQPPFDNEK) has biased composition (basic and acidic residues). The segment at residues 125 to 151 (CDQCNQLRTKCDGQHPCAHCIEFGLTC) is a DNA-binding region (zn(2)-C6 fungal-type). Disordered stretches follow at residues 172 to 210 (AAAA…GTYD) and 559 to 601 (PPNV…INVT). Polar residues predominate over residues 176–188 (TQGSNGHSGQANA). Positions 565-581 (ARQDGERDGDGEADKRH) are enriched in basic and acidic residues.

This sequence belongs to the xlnR/xlr1 family.

It localises to the nucleus. Transcriptional activator of the xylanolytic system. Involved in the regulation of extracellular cellulolytic and xylanolytic genes and in the regulation of the intracellular activities of D-xylose catabolic genes in the pentose catabolic pathway (PCP) in response to the presence of D-xylose. Binds to the DNA sequence 5'-GGNTAAA-3'. This chain is Xylanolytic transcriptional activator xlnR (xlnR), found in Aspergillus niger.